A 1153-amino-acid polypeptide reads, in one-letter code: Error-prone DNA polymerase (1153 aa).

Disordered regions lie at residues 1-39 (MFYS…QAQP) and 64-89 (VGEG…GASQ).

It belongs to the DNA polymerase type-C family. DnaE2 subfamily.

It localises to the cytoplasm. The enzyme catalyses DNA(n) + a 2'-deoxyribonucleoside 5'-triphosphate = DNA(n+1) + diphosphate. In terms of biological role, DNA polymerase involved in damage-induced mutagenesis and translesion synthesis (TLS). It is not the major replicative DNA polymerase. The polypeptide is Error-prone DNA polymerase (Corynebacterium jeikeium (strain K411)).